The following is a 159-amino-acid chain: Phosphodiesterase delta-like protein (159 aa).

The protein belongs to the PDE6D/unc-119 family.

The protein is Phosphodiesterase delta-like protein (pdl-1) of Caenorhabditis elegans.